Here is a 232-residue protein sequence, read N- to C-terminus: Ribosome maturation protein SDO1 homolog (232 aa).

This sequence belongs to the SDO1/SBDS family.

The protein is Ribosome maturation protein SDO1 homolog of Methanothermobacter thermautotrophicus (strain ATCC 29096 / DSM 1053 / JCM 10044 / NBRC 100330 / Delta H) (Methanobacterium thermoautotrophicum).